The following is a 469-amino-acid chain: A-type ATP synthase subunit B (469 aa).

It belongs to the ATPase alpha/beta chains family. Has multiple subunits with at least A(3), B(3), C, D, E, F, H, I and proteolipid K(x).

It is found in the cell membrane. In terms of biological role, component of the A-type ATP synthase that produces ATP from ADP in the presence of a proton gradient across the membrane. The B chain is a regulatory subunit. The sequence is that of A-type ATP synthase subunit B from Staphylothermus marinus (strain ATCC 43588 / DSM 3639 / JCM 9404 / F1).